Here is a 375-residue protein sequence, read N- to C-terminus: S-(hydroxymethyl)glutathione dehydrogenase (375 aa).

C40 serves as a coordination point for Zn(2+). Residue H41 coordinates NAD(+). The Zn(2+) site is built by H62, E63, C92, C95, C98, C106, and C170. NAD(+)-binding positions include 195-200, D219, 293-295, and 318-320; these read GLGGIG, IGV, and TAF.

Belongs to the zinc-containing alcohol dehydrogenase family. Class-III subfamily. In terms of assembly, homotetramer. Zn(2+) is required as a cofactor.

The enzyme catalyses a primary alcohol + NAD(+) = an aldehyde + NADH + H(+). The catalysed reaction is a secondary alcohol + NAD(+) = a ketone + NADH + H(+). It catalyses the reaction S-(hydroxymethyl)glutathione + NADP(+) = S-formylglutathione + NADPH + H(+). It carries out the reaction S-(hydroxymethyl)glutathione + NAD(+) = S-formylglutathione + NADH + H(+). The enzyme catalyses S-nitrosoglutathione + NADH + H(+) = S-(hydroxysulfenamide)glutathione + NAD(+). Functionally, oxidizes long-chain alcohols and, in the presence of glutathione, is able to oxidize formaldehyde. Also acts as a S-nitroso-glutathione reductase by catalyzing the NADH-dependent reduction of S-nitrosoglutathione, thereby regulating protein S-nitrosylation. In Paracoccus denitrificans, this protein is S-(hydroxymethyl)glutathione dehydrogenase (flhA).